Here is a 1003-residue protein sequence, read N- to C-terminus: cGMP-dependent protein kinase (1003 aa).

The disordered stretch occupies residues 1–141 (MGACSSKAQH…KAIKQQEDTQ (141 aa)). A lipid anchor (N-myristoyl glycine) is attached at Gly2. Cys4 is lipidated: S-palmitoyl cysteine. Over residues 69-85 (EQQQQQQQQQQQQQEQQ) the composition is skewed to low complexity. Basic and acidic residues-rich tracts occupy residues 86 to 109 (QHPE…ERKP) and 127 to 141 (ERKV…EDTQ). 4 cNMP-binding domain regions span residues 173–289 (VCSS…FLAS), 292–391 (FFEM…RVLG), 411–548 (VFAS…ATLG), and 570–669 (IFRY…LQIV). Residues Gly237, Glu238, Arg247, and Thr248 each coordinate 3',5'-cyclic GMP. 3',5'-cyclic GMP-binding residues include Arg625, Gly634, Glu635, Ala637, Arg644, and Ser645. The 258-residue stretch at 693 to 950 (LNVVRVVGRG…YKDIKEHAFF (258 aa)) folds into the Protein kinase domain. ATP is bound by residues 699 to 707 (VGRGTFGTV) and Lys722. Asp816 (proton acceptor) is an active-site residue. Residues 951 to 1003 (SDFDWDRLAGRDLSPPLLPKGEIYAEDAEEGGLDIEEDEGIELEDEYEWDKDF) enclose the AGC-kinase C-terminal domain.

This sequence belongs to the protein kinase superfamily. AGC Ser/Thr protein kinase family. cGMP subfamily. As to quaternary structure, monomer. Requires Mg(2+) as cofactor.

It localises to the cell membrane. The protein resides in the cytoplasm. It carries out the reaction L-seryl-[protein] + ATP = O-phospho-L-seryl-[protein] + ADP + H(+). It catalyses the reaction L-threonyl-[protein] + ATP = O-phospho-L-threonyl-[protein] + ADP + H(+). With respect to regulation, activated by cGMP. The cGMP-binding domains acts cooperatively to activate PKG. Inhibited by the antiparasitic small molecule 4-[2-(4-fluorophenyl)-5-(1-methylpiperidine-4-yl)-1Hpyrrol- 3-yl]pyridine (compound 1). Serine/threonine protein kinase which acts as a downstream effector of the second messenger cGMP. In Eimeria tenella (Coccidian parasite), this protein is cGMP-dependent protein kinase.